A 251-amino-acid chain; its full sequence is Phosphoribosylaminoimidazole-succinocarboxamide synthase (251 aa).

It belongs to the SAICAR synthetase family.

The catalysed reaction is 5-amino-1-(5-phospho-D-ribosyl)imidazole-4-carboxylate + L-aspartate + ATP = (2S)-2-[5-amino-1-(5-phospho-beta-D-ribosyl)imidazole-4-carboxamido]succinate + ADP + phosphate + 2 H(+). It functions in the pathway purine metabolism; IMP biosynthesis via de novo pathway; 5-amino-1-(5-phospho-D-ribosyl)imidazole-4-carboxamide from 5-amino-1-(5-phospho-D-ribosyl)imidazole-4-carboxylate: step 1/2. The protein is Phosphoribosylaminoimidazole-succinocarboxamide synthase of Ruegeria pomeroyi (strain ATCC 700808 / DSM 15171 / DSS-3) (Silicibacter pomeroyi).